Consider the following 965-residue polypeptide: RNA-directed RNA polymerase (965 aa).

Residues 662 to 778 (PVAIGFDASR…ICPAVEVGRV (117 aa)) enclose the RdRp catalytic domain.

This sequence belongs to the tombusviridae RNA polymerase family.

It carries out the reaction RNA(n) + a ribonucleoside 5'-triphosphate = RNA(n+1) + diphosphate. In terms of biological role, RNA-dependent RNA polymerase that plays an essential role in the virus replication. The sequence is that of RNA-directed RNA polymerase from Zea mays (Maize).